A 693-amino-acid chain; its full sequence is Polyribonucleotide nucleotidyltransferase (693 aa).

Positions 489 and 495 each coordinate Mg(2+). Residues 556 to 615 enclose the KH domain; that stretch reads PQIHVMNINPAKIKDVVGRGGATVKGIVEKTGAQIDTSDSGEVKVFAKDKKSMDMAVAMI. An S1 motif domain is found at 625–693; the sequence is GQVYKGKIVK…GRVKLSLVAR (69 aa).

Belongs to the polyribonucleotide nucleotidyltransferase family. In terms of assembly, component of the RNA degradosome, which is a multiprotein complex involved in RNA processing and mRNA degradation. The cofactor is Mg(2+).

It localises to the cytoplasm. It carries out the reaction RNA(n+1) + phosphate = RNA(n) + a ribonucleoside 5'-diphosphate. Involved in mRNA degradation. Catalyzes the phosphorolysis of single-stranded polyribonucleotides processively in the 3'- to 5'-direction. The polypeptide is Polyribonucleotide nucleotidyltransferase (Francisella tularensis subsp. tularensis (strain WY96-3418)).